The primary structure comprises 158 residues: Endoribonuclease YbeY (158 aa).

Zn(2+) contacts are provided by His-119, His-123, and His-129.

Belongs to the endoribonuclease YbeY family. Requires Zn(2+) as cofactor.

The protein resides in the cytoplasm. In terms of biological role, single strand-specific metallo-endoribonuclease involved in late-stage 70S ribosome quality control and in maturation of the 3' terminus of the 16S rRNA. This Shewanella woodyi (strain ATCC 51908 / MS32) protein is Endoribonuclease YbeY.